The chain runs to 318 residues: L-lactate dehydrogenase (318 aa).

Residues valine 18, aspartate 39, lysine 44, tyrosine 69, and 83–84 (GA) each bind NAD(+). 2 residues coordinate substrate: glutamine 86 and arginine 92. NAD(+)-binding positions include serine 105, 122–124 (VSN), and serine 147. 124–127 (NPVD) lines the substrate pocket. 152–155 (DTSR) provides a ligand contact to substrate. The Proton acceptor role is filled by histidine 179. Tyrosine 225 carries the phosphotyrosine modification. Position 234 (threonine 234) interacts with substrate.

Belongs to the LDH/MDH superfamily. LDH family. Homotetramer.

It is found in the cytoplasm. It catalyses the reaction (S)-lactate + NAD(+) = pyruvate + NADH + H(+). Its pathway is fermentation; pyruvate fermentation to lactate; (S)-lactate from pyruvate: step 1/1. Functionally, catalyzes the conversion of lactate to pyruvate. The protein is L-lactate dehydrogenase of Clostridium botulinum (strain 657 / Type Ba4).